The primary structure comprises 350 residues: Protein-glutamate methylesterase/protein-glutamine glutaminase (350 aa).

Positions 5–122 constitute a Response regulatory domain; it reads KVLCVDDSAL…RDGLIEYSEV (118 aa). A 4-aspartylphosphate modification is found at D56. A CheB-type methylesterase domain is found at 152–346; sequence PFASSEKLVI…ERILTRLGDR (195 aa). Residues S165, H191, and D288 contribute to the active site.

It belongs to the CheB family. Post-translationally, phosphorylated by CheA. Phosphorylation of the N-terminal regulatory domain activates the methylesterase activity.

Its subcellular location is the cytoplasm. The catalysed reaction is [protein]-L-glutamate 5-O-methyl ester + H2O = L-glutamyl-[protein] + methanol + H(+). It carries out the reaction L-glutaminyl-[protein] + H2O = L-glutamyl-[protein] + NH4(+). Its function is as follows. Involved in chemotaxis. Part of a chemotaxis signal transduction system that modulates chemotaxis in response to various stimuli. Catalyzes the demethylation of specific methylglutamate residues introduced into the chemoreceptors (methyl-accepting chemotaxis proteins or MCP) by CheR. Also mediates the irreversible deamidation of specific glutamine residues to glutamic acid. This is Protein-glutamate methylesterase/protein-glutamine glutaminase from Bordetella bronchiseptica (strain ATCC BAA-588 / NCTC 13252 / RB50) (Alcaligenes bronchisepticus).